A 202-amino-acid chain; its full sequence is Small ribosomal subunit protein uS4 (202 aa).

A disordered region spans residues 23–42 (RKNARRAYAPGQHGQARKKR). In terms of domain architecture, S4 RNA-binding spans 90–153 (MRLDNTVFRL…RSQDLVKRNM (64 aa)).

Belongs to the universal ribosomal protein uS4 family. Part of the 30S ribosomal subunit. Contacts protein S5. The interaction surface between S4 and S5 is involved in control of translational fidelity.

Its function is as follows. One of the primary rRNA binding proteins, it binds directly to 16S rRNA where it nucleates assembly of the body of the 30S subunit. In terms of biological role, with S5 and S12 plays an important role in translational accuracy. The chain is Small ribosomal subunit protein uS4 from Microcystis aeruginosa (strain NIES-843 / IAM M-2473).